Here is a 428-residue protein sequence, read N- to C-terminus: Somatostatin receptor type 3 (428 aa).

Residues M1–T12 show a composition bias toward polar residues. Positions M1–S20 are disordered. Residues M1–G45 are Extracellular-facing. N-linked (GlcNAc...) asparagine glycans are attached at residues N18 and N31. A helical transmembrane segment spans residues I46–L71. Over R72–S81 the chain is Cytoplasmic. The helical transmembrane segment at V82–A103 threads the bilayer. Over Q104–R118 the chain is Extracellular. C117 and C192 are oxidised to a cystine. The chain crosses the membrane as a helical span at residues L119–V140. Residues D141–R162 lie on the Cytoplasmic side of the membrane. A helical membrane pass occupies residues T163–F182. At S183–A206 the chain is on the extracellular side. A helical membrane pass occupies residues F207–V232. The Cytoplasmic segment spans residues K233–R266. Residues M267–V288 traverse the membrane as a helical segment. The Extracellular segment spans residues N289 to G302. A helical membrane pass occupies residues L303–L325. Residues S326–L428 lie on the Cytoplasmic side of the membrane. 3 positions are modified to phosphoserine: S341, S346, and S351. A disordered region spans residues I344–L428. T357 is subject to Phosphothreonine. The span at T357 to E370 shows a compositional bias: acidic residues. Residues R385–L412 show a composition bias toward polar residues.

This sequence belongs to the G-protein coupled receptor 1 family. As to quaternary structure, homodimer and heterodimer with SSTR2. Heterodimerization with SSTR2 inactivates SSTR3 receptor function. Post-translationally, phosphorylated. Phosphorylation increases upon somatostatin binding. In terms of tissue distribution, in the brain, primarily observed in the forebrain. Moderate levels found throughout laminae 2-6 of the neocortex and allocortex, and high levels in lamina 2 of the piriform and entorhinal cortices. High levels also present in the cornu ammonis fields of the hippocampus. In the amygdala, highly expressed in the nucleus of the lateral olfactory tract with expression also detected in the rostral portions of the basal magnocellular and lateral nuclei. In the diencephalon, moderate levels observed in the ventromedial and arcuate nuclei of the hypothalamus. In the midbrain, moderate levels found in the lateral portion of the substantia nigra pars reticulata.

The protein resides in the cell membrane. Functionally, receptor for somatostatin-14 and -28. This receptor is coupled via pertussis toxin sensitive G proteins to inhibition of adenylyl cyclase. The sequence is that of Somatostatin receptor type 3 (Sstr3) from Mus musculus (Mouse).